The primary structure comprises 472 residues: FAD-dependent monooxygenase dpmaE (472 aa).

The N-terminal stretch at 1–24 (MSQRQFKVIIIGGSVTGLTLAHSL) is a signal peptide. FAD is bound by residues glutamate 35, glycine 49, and arginine 108. N-linked (GlcNAc...) asparagine glycosylation is found at asparagine 128 and asparagine 179. Residues aspartate 305 and alanine 318 each coordinate FAD. An N-linked (GlcNAc...) asparagine glycan is attached at asparagine 369. A helical membrane pass occupies residues 440 to 460 (LLPLMFTLPLLYFGLSWIVGI).

It belongs to the paxM FAD-dependent monooxygenase family. The cofactor is FAD.

Its subcellular location is the membrane. It participates in secondary metabolite biosynthesis; terpenoid biosynthesis. Its function is as follows. FAD-dependent monooxygenase; part of the gene cluster that mediates the biosynthesis of the diterpenoid pyrones subglutinols A and B. The first step of the pathway is the synthesis of the alpha-pyrone moiety by the polyketide synthase dpmaA via condensation of one acetyl-CoA starter unit with 3 malonyl-CoA units and 2 methylations. The alpha-pyrone is then combined with geranylgeranyl pyrophosphate (GGPP) formed by the GGPP synthase dpmaD through the action of the prenyltransferase dpmaC to yield a linear alpha-pyrone diterpenoid. Subsequent steps in the diterpenoid pyrone biosynthetic pathway involve the decalin core formation, which is initiated by the epoxidation of the C10-C11 olefin by the FAD-dependent oxidoreductase dpmaE, and is followed by a cyclization cascade catalyzed by the terpene cyclase dpmaB. The dehydrogenase dpmaF is then involved in tetrahydrofuran (THF) ring formation at the C5 unit to complete the formation of subglutinols A and B. The polypeptide is FAD-dependent monooxygenase dpmaE (Metarhizium anisopliae (Entomophthora anisopliae)).